Reading from the N-terminus, the 158-residue chain is Ribonuclease H (158 aa).

The RNase H type-1 domain occupies 1 to 147; the sequence is MKVTIYTDGA…CDVLATTAAD (147 aa). The Mg(2+) site is built by Asp-8, Glu-52, Asp-74, and Asp-139.

It belongs to the RNase H family. In terms of assembly, monomer. Mg(2+) serves as cofactor.

It localises to the cytoplasm. It catalyses the reaction Endonucleolytic cleavage to 5'-phosphomonoester.. Endonuclease that specifically degrades the RNA of RNA-DNA hybrids. The chain is Ribonuclease H from Lachnoclostridium phytofermentans (strain ATCC 700394 / DSM 18823 / ISDg) (Clostridium phytofermentans).